The following is a 258-amino-acid chain: Imidazole glycerol phosphate synthase subunit HisF (258 aa).

Active-site residues include Asp11 and Asp130.

Belongs to the HisA/HisF family. As to quaternary structure, heterodimer of HisH and HisF.

The protein resides in the cytoplasm. It carries out the reaction 5-[(5-phospho-1-deoxy-D-ribulos-1-ylimino)methylamino]-1-(5-phospho-beta-D-ribosyl)imidazole-4-carboxamide + L-glutamine = D-erythro-1-(imidazol-4-yl)glycerol 3-phosphate + 5-amino-1-(5-phospho-beta-D-ribosyl)imidazole-4-carboxamide + L-glutamate + H(+). Its pathway is amino-acid biosynthesis; L-histidine biosynthesis; L-histidine from 5-phospho-alpha-D-ribose 1-diphosphate: step 5/9. Its function is as follows. IGPS catalyzes the conversion of PRFAR and glutamine to IGP, AICAR and glutamate. The HisF subunit catalyzes the cyclization activity that produces IGP and AICAR from PRFAR using the ammonia provided by the HisH subunit. The chain is Imidazole glycerol phosphate synthase subunit HisF from Escherichia fergusonii (strain ATCC 35469 / DSM 13698 / CCUG 18766 / IAM 14443 / JCM 21226 / LMG 7866 / NBRC 102419 / NCTC 12128 / CDC 0568-73).